The chain runs to 511 residues: Xylose import ATP-binding protein XylG (511 aa).

ABC transporter domains lie at 6–244 (LEMR…VGRE) and 261–506 (FEAR…IGKP). An ATP-binding site is contributed by 38 to 45 (GENGAGKS).

This sequence belongs to the ABC transporter superfamily. Xylose importer (TC 3.A.1.2.4) family. In terms of assembly, the complex is composed of two ATP-binding proteins (XylG), two transmembrane proteins (XylH) and a solute-binding protein (XylF).

The protein localises to the cell inner membrane. The catalysed reaction is D-xylose(out) + ATP + H2O = D-xylose(in) + ADP + phosphate + H(+). Part of the ABC transporter complex XylFGH involved in xylose import. Responsible for energy coupling to the transport system. The protein is Xylose import ATP-binding protein XylG of Brucella abortus (strain 2308).